Consider the following 250-residue polypeptide: Golgi SNAP receptor complex member 1 (250 aa).

At alanine 2 the chain carries N-acetylalanine. Over 2–229 (AAGTSNYWED…QRINLRKRRD (228 aa)) the chain is Cytoplasmic. A coiled-coil region spans residues 9–30 (WEDLRKQARQLENELDLKLVSF). Residues 37–59 (YSHSSARDGGRDRYSSDTTPLLN) form a disordered region. Residues 41-51 (SARDGGRDRYS) are compositionally biased toward basic and acidic residues. The stretch at 68 to 95 (ETMAIEIEQLLARLTGVNDKMAEYTHSA) forms a coiled coil. Serine 141 bears the Phosphoserine mark. A helical; Anchor for type IV membrane protein membrane pass occupies residues 230–250 (SLILGGVIGICTILLLLYAFH).

The protein belongs to the GOSR1 family. Component of several multiprotein Golgi SNARE complexes. Identified in a SNARE complex with BET1, STX5 and YKT6, in a SNARE complex with BET1L, STX5 and YKT6, in a SNARE complex with STX5, GOSR2, SEC22B and BET1, and in complex with STX5 and COG3. Interacts with GABARAPL2. Interacts with the 34 kDa STX5 isoform.

Its subcellular location is the golgi apparatus membrane. Its function is as follows. Involved in transport from the ER to the Golgi apparatus as well as in intra-Golgi transport. It belongs to a super-family of proteins called t-SNAREs or soluble NSF (N-ethylmaleimide-sensitive factor) attachment protein receptor. May play a protective role against hydrogen peroxide induced cytotoxicity under glutathione depleted conditions in neuronal cells by regulating the intracellular ROS levels via inhibition of p38 MAPK (MAPK11, MAPK12, MAPK13 and MAPK14). Participates in docking and fusion stage of ER to cis-Golgi transport. Plays an important physiological role in VLDL-transport vesicle-Golgi fusion and thus in VLDL delivery to the hepatic cis-Golgi. This Rattus norvegicus (Rat) protein is Golgi SNAP receptor complex member 1 (Gosr1).